The chain runs to 123 residues: Ribosome-binding factor A (123 aa).

This sequence belongs to the RbfA family. Monomer. Binds 30S ribosomal subunits, but not 50S ribosomal subunits or 70S ribosomes.

The protein localises to the cytoplasm. Functionally, one of several proteins that assist in the late maturation steps of the functional core of the 30S ribosomal subunit. Associates with free 30S ribosomal subunits (but not with 30S subunits that are part of 70S ribosomes or polysomes). Required for efficient processing of 16S rRNA. May interact with the 5'-terminal helix region of 16S rRNA. The sequence is that of Ribosome-binding factor A from Acetivibrio thermocellus (strain ATCC 27405 / DSM 1237 / JCM 9322 / NBRC 103400 / NCIMB 10682 / NRRL B-4536 / VPI 7372) (Clostridium thermocellum).